Here is a 118-residue protein sequence, read N- to C-terminus: Integration host factor subunit alpha (118 aa).

The interval 97–118 (NGAMPMSTEESDENTAQSASGG) is disordered.

Belongs to the bacterial histone-like protein family. Heterodimer of an alpha and a beta chain.

In terms of biological role, this protein is one of the two subunits of integration host factor, a specific DNA-binding protein that functions in genetic recombination as well as in transcriptional and translational control. The polypeptide is Integration host factor subunit alpha (Rhodopseudomonas palustris (strain ATCC BAA-98 / CGA009)).